The following is a 291-amino-acid chain: Protease HtpX homolog (291 aa).

Transmembrane regions (helical) follow at residues 4-24 and 38-58; these read VILFLLTNFAVMLVLSVTARI and MGMLLVFAALIGFGGSFISLL. H144 is a binding site for Zn(2+). E145 is an active-site residue. H148 serves as a coordination point for Zn(2+). 2 helical membrane-spanning segments follow: residues 159 to 179 and 199 to 219; these read LIQGVLNTFVIFLSRIIAYAV and ISSIACEILFGILASIVVMFF. A Zn(2+)-binding site is contributed by E224.

Belongs to the peptidase M48B family. Zn(2+) serves as cofactor.

It is found in the cell inner membrane. The sequence is that of Protease HtpX homolog from Pelodictyon phaeoclathratiforme (strain DSM 5477 / BU-1).